A 78-amino-acid chain; its full sequence is Acyl carrier protein (78 aa).

Residues 2 to 77 form the Carrier domain; that stretch reads STIEERVKKI…AAIDYVNSHQ (76 aa). S37 is modified (O-(pantetheine 4'-phosphoryl)serine).

The protein belongs to the acyl carrier protein (ACP) family. In terms of processing, 4'-phosphopantetheine is transferred from CoA to a specific serine of apo-ACP by AcpS. This modification is essential for activity because fatty acids are bound in thioester linkage to the sulfhydryl of the prosthetic group.

The protein localises to the cytoplasm. Its pathway is lipid metabolism; fatty acid biosynthesis. Its function is as follows. Carrier of the growing fatty acid chain in fatty acid biosynthesis. The chain is Acyl carrier protein from Pseudomonas putida (strain W619).